The primary structure comprises 164 residues: 6,7-dimethyl-8-ribityllumazine synthase (164 aa).

Residues F22, 56-58, and 80-82 contribute to the 5-amino-6-(D-ribitylamino)uracil site; these read AWE and AVI. 85–86 provides a ligand contact to (2S)-2-hydroxy-3-oxobutyl phosphate; it reads DT. H88 (proton donor) is an active-site residue. L113 serves as a coordination point for 5-amino-6-(D-ribitylamino)uracil. R127 contributes to the (2S)-2-hydroxy-3-oxobutyl phosphate binding site.

This sequence belongs to the DMRL synthase family.

It catalyses the reaction (2S)-2-hydroxy-3-oxobutyl phosphate + 5-amino-6-(D-ribitylamino)uracil = 6,7-dimethyl-8-(1-D-ribityl)lumazine + phosphate + 2 H2O + H(+). Its pathway is cofactor biosynthesis; riboflavin biosynthesis; riboflavin from 2-hydroxy-3-oxobutyl phosphate and 5-amino-6-(D-ribitylamino)uracil: step 1/2. In terms of biological role, catalyzes the formation of 6,7-dimethyl-8-ribityllumazine by condensation of 5-amino-6-(D-ribitylamino)uracil with 3,4-dihydroxy-2-butanone 4-phosphate. This is the penultimate step in the biosynthesis of riboflavin. In Gemmatimonas aurantiaca (strain DSM 14586 / JCM 11422 / NBRC 100505 / T-27), this protein is 6,7-dimethyl-8-ribityllumazine synthase.